The following is a 231-amino-acid chain: 2-hydroxy-3-keto-5-methylthiopentenyl-1-phosphate phosphatase (231 aa).

It belongs to the HAD-like hydrolase superfamily. MtnX family.

The catalysed reaction is 2-hydroxy-5-methylsulfanyl-3-oxopent-1-enyl phosphate + H2O = 1,2-dihydroxy-5-(methylsulfanyl)pent-1-en-3-one + phosphate. The protein operates within amino-acid biosynthesis; L-methionine biosynthesis via salvage pathway; L-methionine from S-methyl-5-thio-alpha-D-ribose 1-phosphate: step 4/6. Functionally, dephosphorylates 2-hydroxy-3-keto-5-methylthiopentenyl-1-phosphate (HK-MTPenyl-1-P) yielding 1,2-dihydroxy-3-keto-5-methylthiopentene (DHK-MTPene). This is 2-hydroxy-3-keto-5-methylthiopentenyl-1-phosphate phosphatase from Bacillus pumilus (strain SAFR-032).